Consider the following 118-residue polypeptide: Large ribosomal subunit protein bL19 (118 aa).

It belongs to the bacterial ribosomal protein bL19 family.

Functionally, this protein is located at the 30S-50S ribosomal subunit interface and may play a role in the structure and function of the aminoacyl-tRNA binding site. The protein is Large ribosomal subunit protein bL19 of Salinibacter ruber (strain DSM 13855 / M31).